A 310-amino-acid polypeptide reads, in one-letter code: D-alanine--D-alanine ligase (310 aa).

One can recognise an ATP-grasp domain in the interval Lys-105 to Leu-301. Ser-133 to Gln-186 lines the ATP pocket. The Mg(2+) site is built by Asp-254, Glu-267, and Asn-269.

The protein belongs to the D-alanine--D-alanine ligase family. Mg(2+) is required as a cofactor. The cofactor is Mn(2+).

The protein localises to the cytoplasm. The catalysed reaction is 2 D-alanine + ATP = D-alanyl-D-alanine + ADP + phosphate + H(+). It participates in cell wall biogenesis; peptidoglycan biosynthesis. Cell wall formation. The chain is D-alanine--D-alanine ligase from Pelobacter propionicus (strain DSM 2379 / NBRC 103807 / OttBd1).